A 158-amino-acid polypeptide reads, in one-letter code: Ribosome-binding factor A (158 aa).

The segment at 130-158 is disordered; sequence TAQYAGDADPYKHDDEAEAEGDEFESDEE. Over residues 145–158 the composition is skewed to acidic residues; the sequence is EAEAEGDEFESDEE.

The protein belongs to the RbfA family. As to quaternary structure, monomer. Binds 30S ribosomal subunits, but not 50S ribosomal subunits or 70S ribosomes.

It localises to the cytoplasm. In terms of biological role, one of several proteins that assist in the late maturation steps of the functional core of the 30S ribosomal subunit. Associates with free 30S ribosomal subunits (but not with 30S subunits that are part of 70S ribosomes or polysomes). Required for efficient processing of 16S rRNA. May interact with the 5'-terminal helix region of 16S rRNA. This chain is Ribosome-binding factor A, found in Bifidobacterium longum subsp. infantis (strain ATCC 15697 / DSM 20088 / JCM 1222 / NCTC 11817 / S12).